Here is a 270-residue protein sequence, read N- to C-terminus: Mevalonyl-coenzyme A hydratase sidH (270 aa).

The short motif at 268 to 270 is the PTS1-type peroxisomal targeting signal element; sequence SKL.

Belongs to the enoyl-CoA hydratase/isomerase family.

The protein resides in the peroxisome. The protein operates within siderophore biosynthesis. In terms of biological role, mevalonyl-coenzyme A hydratase; part of the siderophore biosynthetic pathway. Aspergillus fumigatus produces 4 types of siderophores, low-molecular-mass iron chelators, including excreted fusarinine C (FsC) and triacetylfusarinine C (TAFC) for iron uptake and intacellular ferricrocin (FC) for hyphal and hydroxyferricrocin (HFC) for conidial iron distribution and storage. TAFC consists of 3 N(2)-acetyl-N(5)-anhydromevalonyl-N(5)-hydroxyornithine residues cyclically linked by ester bonds; FC is a cyclic hexapeptide with the structure Gly-Ser-Gly-(N(5)-acetyl-N(5)-hydroxyornithine)x3. The biosynthesis of all four siderophores depends on the hydroxylation of ornithine, catalyzed by the monooxygenase sidA. Subsequently, the pathways for biosynthesis of extra- and intracellular siderophores split. For biosynthesis of extracellular siderophores, the transacylase sidF transfers anhydromevalonyl to N(5)-hydroxyornithine. The required anhydromevalonyl-CoA moiety is derived from mevalonate by CoA ligation and dehydration catalyzed by sidI and sidH respectively. The acetylation of N(5)-hydroxyornithine for FC biosynthesis involves the constitutively expressed sidL. FC is hydroxylated to HFC by an as yet uncharacterized enzyme during conidiation. Assembly of fusarinine C (FsC) and FC is catalyzed by two different nonribosomal peptide synthetases (NRPS), sidD and sidC respectively. Subsequently, sidG catalyzes N2-acetylation of FsC for forming TAFC. Both extra- and intracellular siderophores are crucial for growth during iron limitation and virulence. This Aspergillus fumigatus (strain ATCC MYA-4609 / CBS 101355 / FGSC A1100 / Af293) (Neosartorya fumigata) protein is Mevalonyl-coenzyme A hydratase sidH.